The following is a 396-amino-acid chain: Putative arsenical pump-driving ATPase 1 (396 aa).

8-15 (GKGGVGKT) is an ATP binding site.

The protein belongs to the arsA ATPase family.

The catalysed reaction is arsenite(in) + ATP + H2O = arsenite(out) + ADP + phosphate + H(+). Its function is as follows. Anion-transporting ATPase. Catalyzes the extrusion of arsenite. The chain is Putative arsenical pump-driving ATPase 1 (arsA1) from Aquifex aeolicus (strain VF5).